A 394-amino-acid polypeptide reads, in one-letter code: Elongation factor Tu (394 aa).

In terms of domain architecture, tr-type G spans 10–204; that stretch reads KPHVNVGTIG…ALDSYIPEPQ (195 aa). Residues 19–26 form a G1 region; that stretch reads GHVDHGKT. 19–26 is a binding site for GTP; the sequence is GHVDHGKT. T26 provides a ligand contact to Mg(2+). Residues 60-64 form a G2 region; the sequence is GITIN. Residues 81–84 are G3; that stretch reads DCPG. GTP-binding positions include 81–85 and 136–139; these read DCPGH and NKCD. Residues 136–139 form a G4 region; sequence NKCD. The segment at 174–176 is G5; it reads SAL.

The protein belongs to the TRAFAC class translation factor GTPase superfamily. Classic translation factor GTPase family. EF-Tu/EF-1A subfamily. Monomer.

The protein resides in the cytoplasm. It catalyses the reaction GTP + H2O = GDP + phosphate + H(+). GTP hydrolase that promotes the GTP-dependent binding of aminoacyl-tRNA to the A-site of ribosomes during protein biosynthesis. In Shewanella baltica (strain OS185), this protein is Elongation factor Tu.